A 322-amino-acid polypeptide reads, in one-letter code: N-acetyl-gamma-glutamyl-phosphate reductase (322 aa).

Cysteine 132 is a catalytic residue.

Belongs to the NAGSA dehydrogenase family. Type 1 subfamily.

Its subcellular location is the cytoplasm. It catalyses the reaction N-acetyl-L-glutamate 5-semialdehyde + phosphate + NADP(+) = N-acetyl-L-glutamyl 5-phosphate + NADPH + H(+). It participates in amino-acid biosynthesis; L-arginine biosynthesis; N(2)-acetyl-L-ornithine from L-glutamate: step 3/4. Functionally, catalyzes the NADPH-dependent reduction of N-acetyl-5-glutamyl phosphate to yield N-acetyl-L-glutamate 5-semialdehyde. This Bacteroides fragilis (strain YCH46) protein is N-acetyl-gamma-glutamyl-phosphate reductase.